Consider the following 92-residue polypeptide: Acylphosphatase (92 aa).

The 87-residue stretch at 6-92 (RMYVIVYGIV…TGEFASFDTY (87 aa)) folds into the Acylphosphatase-like domain. Residues arginine 21 and asparagine 39 contribute to the active site.

Belongs to the acylphosphatase family.

The catalysed reaction is an acyl phosphate + H2O = a carboxylate + phosphate + H(+). The sequence is that of Acylphosphatase (acyP) from Sulfolobus acidocaldarius (strain ATCC 33909 / DSM 639 / JCM 8929 / NBRC 15157 / NCIMB 11770).